Here is a 356-residue protein sequence, read N- to C-terminus: MSTTSEAVQSKYSEAGVDIDKGNAFVEGIKDIVASTHKNGVIDNIGGFSAHIAIDVTKYPKPVIVNSTDGVGTKLAIAHMCNKHDTIGIDLVAMCVNDLIVGGATPLSFLDYFAVGKLDIEVATEVVKGIAEGCKQAGCSLVGGETAEMPGLYQGSDYDLAGFVTGIVDRDSIIDGSDVRSGNKIIGLASSGVHSNGYSLVRKICFDDNDYSVEDHIEELGSTLGEELLKPTRIYVQQVLNVIKNYPIHGMVHNTGGGFIDNIPRILPKGYKATLQAGSWDVPAIFTFLEEKGKVPREEMYRTFNMGVGLLVIVAEDKAEDILHHFEALGEKASIIGEIQKQTDENDERVTILPEG.

The protein belongs to the AIR synthase family.

It localises to the cytoplasm. The catalysed reaction is 2-formamido-N(1)-(5-O-phospho-beta-D-ribosyl)acetamidine + ATP = 5-amino-1-(5-phospho-beta-D-ribosyl)imidazole + ADP + phosphate + H(+). The protein operates within purine metabolism; IMP biosynthesis via de novo pathway; 5-amino-1-(5-phospho-D-ribosyl)imidazole from N(2)-formyl-N(1)-(5-phospho-D-ribosyl)glycinamide: step 2/2. This is Phosphoribosylformylglycinamidine cyclo-ligase from Desulfotalea psychrophila (strain LSv54 / DSM 12343).